A 257-amino-acid polypeptide reads, in one-letter code: Pantothenate synthetase (257 aa).

M29–H36 serves as a coordination point for ATP. Residue H36 is the Proton donor of the active site. A (R)-pantoate-binding site is contributed by Q60. Q60 is a beta-alanine binding site. ATP is bound at residue G145–D148. Q151 is a (R)-pantoate binding site. Residues V174 and L182–R185 each bind ATP.

Belongs to the pantothenate synthetase family. As to quaternary structure, homodimer.

Its subcellular location is the cytoplasm. The enzyme catalyses (R)-pantoate + beta-alanine + ATP = (R)-pantothenate + AMP + diphosphate + H(+). It participates in cofactor biosynthesis; (R)-pantothenate biosynthesis; (R)-pantothenate from (R)-pantoate and beta-alanine: step 1/1. Its function is as follows. Catalyzes the condensation of pantoate with beta-alanine in an ATP-dependent reaction via a pantoyl-adenylate intermediate. In Coxiella burnetii (strain CbuK_Q154) (Coxiella burnetii (strain Q154)), this protein is Pantothenate synthetase.